The chain runs to 145 residues: Lysozyme C (145 aa).

The N-terminal stretch at 1 to 19 is a signal peptide; that stretch reads MLFFGFLLAFLSAVPGTEG. Residues 20-145 enclose the C-type lysozyme domain; sequence EIIPRCELVK…RDLSSYVKGC (126 aa). 4 disulfides stabilise this stretch: C25/C145, C49/C133, C82/C98, and C94/C112. Residues E54 and D70 contribute to the active site.

It belongs to the glycosyl hydrolase 22 family. Monomer.

It localises to the secreted. The enzyme catalyses Hydrolysis of (1-&gt;4)-beta-linkages between N-acetylmuramic acid and N-acetyl-D-glucosamine residues in a peptidoglycan and between N-acetyl-D-glucosamine residues in chitodextrins.. In terms of biological role, lysozymes have primarily a bacteriolytic function; those in tissues and body fluids are associated with the monocyte-macrophage system and enhance the activity of immunoagents. This is Lysozyme C (LYZ) from Opisthocomus hoazin (Hoatzin).